We begin with the raw amino-acid sequence, 150 residues long: 3-hydroxyacyl-[acyl-carrier-protein] dehydratase FabZ (150 aa).

Histidine 54 is an active-site residue.

Belongs to the thioester dehydratase family. FabZ subfamily.

It localises to the cytoplasm. It catalyses the reaction a (3R)-hydroxyacyl-[ACP] = a (2E)-enoyl-[ACP] + H2O. Functionally, involved in unsaturated fatty acids biosynthesis. Catalyzes the dehydration of short chain beta-hydroxyacyl-ACPs and long chain saturated and unsaturated beta-hydroxyacyl-ACPs. This Aliivibrio fischeri (strain ATCC 700601 / ES114) (Vibrio fischeri) protein is 3-hydroxyacyl-[acyl-carrier-protein] dehydratase FabZ.